We begin with the raw amino-acid sequence, 91 residues long: MSRSIKKGPFVDAHLIKKVDAAVAGKDKKPIKTWSRRSTVLPEFIGLTIAVHNGRQHVPIYINENMVGHKLGEFALTRTFKGHAADKKSKR.

Belongs to the universal ribosomal protein uS19 family.

Its function is as follows. Protein S19 forms a complex with S13 that binds strongly to the 16S ribosomal RNA. The chain is Small ribosomal subunit protein uS19 from Bordetella pertussis (strain Tohama I / ATCC BAA-589 / NCTC 13251).